Here is a 156-residue protein sequence, read N- to C-terminus: ATP synthase subunit b (156 aa).

The chain crosses the membrane as a helical span at residues 7-27 (LIGQTIAFIVFVWFCMKFVWP).

The protein belongs to the ATPase B chain family. F-type ATPases have 2 components, F(1) - the catalytic core - and F(0) - the membrane proton channel. F(1) has five subunits: alpha(3), beta(3), gamma(1), delta(1), epsilon(1). F(0) has three main subunits: a(1), b(2) and c(10-14). The alpha and beta chains form an alternating ring which encloses part of the gamma chain. F(1) is attached to F(0) by a central stalk formed by the gamma and epsilon chains, while a peripheral stalk is formed by the delta and b chains.

The protein localises to the cell inner membrane. Its function is as follows. F(1)F(0) ATP synthase produces ATP from ADP in the presence of a proton or sodium gradient. F-type ATPases consist of two structural domains, F(1) containing the extramembraneous catalytic core and F(0) containing the membrane proton channel, linked together by a central stalk and a peripheral stalk. During catalysis, ATP synthesis in the catalytic domain of F(1) is coupled via a rotary mechanism of the central stalk subunits to proton translocation. In terms of biological role, component of the F(0) channel, it forms part of the peripheral stalk, linking F(1) to F(0). This chain is ATP synthase subunit b, found in Idiomarina loihiensis (strain ATCC BAA-735 / DSM 15497 / L2-TR).